Reading from the N-terminus, the 1060-residue chain is Anoctamin-8 (1060 aa).

A disordered region spans residues 1-32 (MAEAASGAGDVTLEGERGKRPPPEGEPAAPAS). A2 is modified (N-acetylalanine). Topologically, residues 2–244 (AEAASGAGDV…DDICDYFGVK (243 aa)) are cytoplasmic. Basic and acidic residues predominate over residues 14–23 (EGERGKRPPP). A helical membrane pass occupies residues 245–265 (IAMYFAWLGFYTSAMVYPAVF). Over 266–281 (GSVLYTFTEADQTSRD) the chain is Extracellular. A helical transmembrane segment spans residues 282 to 302 (VSCVVFALFNVIWSTLFLEEW). Residues 303–356 (KRRGAELAYKWGTLDSPGEAVEEPRPQFRGIRRISPITRAEEFYYPPWKRLLFQ) are Cytoplasmic-facing. The residue at position 318 (S318) is a Phosphoserine. The chain crosses the membrane as a helical span at residues 357-377 (LLVSLPLCLACLICVFILMLG). Topologically, residues 378–400 (CFQLQELVLSVKGLPRLVRFLPK) are extracellular. A helical membrane pass occupies residues 401 to 421 (VMLALLVSVSAEGYKKLAVWL). At 422–437 (NDMENYRLESTYERHL) the chain is on the cytoplasmic side. A helical membrane pass occupies residues 438–458 (IIKVVLFQFVNSYLSLFYIGF). The Extracellular segment spans residues 459 to 745 (YLKDMDRLKE…YEDTFQDYQE (287 aa)). 4 disordered regions span residues 529-605 (AQAD…SLLD), 619-640 (GAGR…SPTM), 653-672 (AEED…EPQT), and 680-723 (GEGR…HSPQ). Residues 534 to 547 (GGAGSRRCLGGGCG) are compositionally biased toward gly residues. Acidic residues-rich tracts occupy residues 549 to 559 (PEEENEEEEEA) and 581 to 602 (EEDE…EEGS). Residue S665 is modified to Phosphoserine. The segment covering 680 to 694 (GEGRDQGPDGDRDTE) has biased composition (basic and acidic residues). The N-linked (GlcNAc...) asparagine glycan is linked to N708. A helical transmembrane segment spans residues 746–766 (MFVQFGYVVLFSSAFPLAALC). Residues 767 to 802 (ALVNNLIEIRSDAFKLCTGLQRPFGRRVESIGQWQK) lie on the Cytoplasmic side of the membrane. S796 bears the Phosphoserine mark. The chain crosses the membrane as a helical span at residues 803–823 (VMEAMGVLAIVVNCYLIGQCG). At 824-836 (QLQRLFPWLSPEA) the chain is on the extracellular side. The chain crosses the membrane as a helical span at residues 837–857 (AIVSVVVLEHLALLVKYLIHV). Topologically, residues 858 to 1060 (AIPDIPGWVA…PRPEDAGHRP (203 aa)) are cytoplasmic. Positions 884-1060 (HERQAQQRFQ…PRPEDAGHRP (177 aa)) are disordered. Basic and acidic residues-rich tracts occupy residues 899–927 (RREE…EARA) and 935–950 (VAER…ERPR). The segment covering 972 to 986 (TRPPAPTGCAPPPRS) has biased composition (pro residues). R991 carries the asymmetric dimethylarginine; alternate modification. Residue R991 is modified to Omega-N-methylarginine; alternate. R999 is modified (omega-N-methylarginine). Over residues 1049-1060 (PEPRPEDAGHRP) the composition is skewed to basic and acidic residues.

This sequence belongs to the anoctamin family. Predominant expression seen in epithelial tissues.

The protein resides in the cell membrane. Functionally, does not exhibit calcium-activated chloride channel (CaCC) activity. In Mus musculus (Mouse), this protein is Anoctamin-8 (Ano8).